The following is an 854-amino-acid chain: DNA mismatch repair protein MutS (854 aa).

Residue 614 to 621 (GPNMGGKS) coordinates ATP.

It belongs to the DNA mismatch repair MutS family.

In terms of biological role, this protein is involved in the repair of mismatches in DNA. It is possible that it carries out the mismatch recognition step. This protein has a weak ATPase activity. The chain is DNA mismatch repair protein MutS from Sodalis glossinidius (strain morsitans).